The primary structure comprises 155 residues: Ribosomal RNA large subunit methyltransferase H (155 aa).

S-adenosyl-L-methionine-binding positions include Leu-72, Gly-103, and 122 to 127 (LSALTL).

It belongs to the RNA methyltransferase RlmH family. In terms of assembly, homodimer.

Its subcellular location is the cytoplasm. The catalysed reaction is pseudouridine(1915) in 23S rRNA + S-adenosyl-L-methionine = N(3)-methylpseudouridine(1915) in 23S rRNA + S-adenosyl-L-homocysteine + H(+). Its function is as follows. Specifically methylates the pseudouridine at position 1915 (m3Psi1915) in 23S rRNA. The sequence is that of Ribosomal RNA large subunit methyltransferase H from Citrobacter koseri (strain ATCC BAA-895 / CDC 4225-83 / SGSC4696).